Here is a 125-residue protein sequence, read N- to C-terminus: Prefoldin subunit beta (125 aa).

The protein belongs to the prefoldin subunit beta family. In terms of assembly, heterohexamer of two alpha and four beta subunits.

Its subcellular location is the cytoplasm. Its function is as follows. Molecular chaperone capable of stabilizing a range of proteins. Seems to fulfill an ATP-independent, HSP70-like function in archaeal de novo protein folding. This is Prefoldin subunit beta from Pyrobaculum calidifontis (strain DSM 21063 / JCM 11548 / VA1).